The sequence spans 171 residues: Ribosome maturation factor RimM (171 aa).

The PRC barrel domain occupies 96–168; the sequence is EDGFYDHELE…TATITPPEGL (73 aa).

It belongs to the RimM family. Binds ribosomal protein uS19.

It is found in the cytoplasm. An accessory protein needed during the final step in the assembly of 30S ribosomal subunit, possibly for assembly of the head region. Essential for efficient processing of 16S rRNA. May be needed both before and after RbfA during the maturation of 16S rRNA. It has affinity for free ribosomal 30S subunits but not for 70S ribosomes. This is Ribosome maturation factor RimM from Corynebacterium glutamicum (strain R).